An 816-amino-acid polypeptide reads, in one-letter code: Homeobox-leucine zipper protein ROC9 (816 aa).

Residues 26-104 (VFGRKNGPAA…RRKNYHRHTA (79 aa)) are disordered. Residues 92-101 (KKRRRKNYHR) are compositionally biased toward basic residues. Residues 95–154 (RRKNYHRHTAEQIRIMEALFKESPHPDERQRQQVSKQLGLSARQVKFWFQNRRTQIKAVQ) constitute a DNA-binding region (homeobox). The stretch at 149-182 (QIKAVQERHENSLLKSELEKLQDEHRAMRELAKK) forms a coiled coil. The tract at residues 265–296 (KSAADGIASPPCSASAGAMQTNSRSPPLHDHD) is disordered. Positions 302 to 541 (HDDDKPRILE…LQLQCERMVF (240 aa)) constitute an START domain.

Belongs to the HD-ZIP homeobox family. Class IV subfamily.

Its subcellular location is the nucleus. Its function is as follows. Probable transcription factor. The protein is Homeobox-leucine zipper protein ROC9 (ROC9) of Oryza sativa subsp. japonica (Rice).